The chain runs to 135 residues: MLSPKRTRFRKQHRGRMKGISYRGNRICFGGYALQALEPAWITSRQIEAGRRAMTRYARRGGKIWVRIFPDKPVTVRPAETRMGSGKGSPEFWVFVVKPGRILYEMGGVSEIVAREAISIAASKMPIRTQFIIAG.

The protein belongs to the universal ribosomal protein uL16 family. As to quaternary structure, part of the 50S ribosomal subunit.

It is found in the plastid. It localises to the chloroplast. The chain is Large ribosomal subunit protein uL16c from Ranunculus macranthus (Large buttercup).